We begin with the raw amino-acid sequence, 149 residues long: Large ribosomal subunit protein uL15C (149 aa).

The disordered stretch occupies residues 21-40; it reads RIGKHRKQRGGRGNAGGQHH.

Belongs to the universal ribosomal protein uL15 family. Component of the large ribosomal subunit.

The protein localises to the cytoplasm. Its subcellular location is the cytosol. It localises to the endoplasmic reticulum. Component of the large ribosomal subunit. The ribosome is a large ribonucleoprotein complex responsible for the synthesis of proteins in the cell. In Entamoeba histolytica (strain ATCC 30459 / HM-1:IMSS / ABRM), this protein is Large ribosomal subunit protein uL15C (rpl27a-3).